Reading from the N-terminus, the 626-residue chain is UvrABC system protein C (626 aa).

The region spanning 20 to 97 (ECSGVYKMLD…IKKFQPKFNI (78 aa)) is the GIY-YIG domain. One can recognise a UVR domain in the interval 207 to 242 (RELQENLSKKMQELSSQMRFEEAAEIRDRIKALSYV).

This sequence belongs to the UvrC family. As to quaternary structure, interacts with UvrB in an incision complex.

It localises to the cytoplasm. Functionally, the UvrABC repair system catalyzes the recognition and processing of DNA lesions. UvrC both incises the 5' and 3' sides of the lesion. The N-terminal half is responsible for the 3' incision and the C-terminal half is responsible for the 5' incision. In Rickettsia typhi (strain ATCC VR-144 / Wilmington), this protein is UvrABC system protein C.